A 444-amino-acid chain; its full sequence is Viral protein kinase (444 aa).

Residues 1–25 (MRWKRMERRPPLTPLRRSRTQSSGG) are disordered. Residues 90-98 (LGRGAFGII) and Lys-108 contribute to the ATP site. Asp-201 serves as the catalytic Proton acceptor.

Interacts with protein K-bZIP/K8. Interacts with host beta-catenin/CTNNB1. AUtophosphorylated.

The protein resides in the host nucleus. It carries out the reaction L-seryl-[protein] + ATP = O-phospho-L-seryl-[protein] + ADP + H(+). It catalyses the reaction L-threonyl-[protein] + ATP = O-phospho-L-threonyl-[protein] + ADP + H(+). Serine/threonine protein kinase that plays a role in viral gene expression, viral DNA replication and encapsidation, and nuclear egress of virions. Regulates host transcriptional activity through interactions with RNA helicase and c-Jun N-terminal kinase (JNK) and viral transcriptional activity through interactions with the viral protein K-bZIP/K8. Induces host chromosome condensation and phosphorylation of histone H3. Phosphorylates the DNA polymerase processivity factor hence modulating its processivity function. Inhibits the host Wnt signaling pathway via direct interactions with beta-catenin/CTNNB1 while the kinase activity of vPK is not required for this inhibitory activity. Also phosphorylates host SAMHD1 and thereby counteracts its antiviral effect by reducing its dNTP hydrolase activity. The sequence is that of Viral protein kinase (vPK) from Human herpesvirus 8 type P (isolate GK18) (HHV-8).